The chain runs to 101 residues: Small ribosomal subunit protein uS17 (101 aa).

It belongs to the universal ribosomal protein uS17 family. Part of the 30S ribosomal subunit.

Its function is as follows. One of the primary rRNA binding proteins, it binds specifically to the 5'-end of 16S ribosomal RNA. The chain is Small ribosomal subunit protein uS17 from Koribacter versatilis (strain Ellin345).